Consider the following 384-residue polypeptide: Chorismate synthase (384 aa).

NADP(+)-binding residues include Arg-39 and Arg-45. FMN contacts are provided by residues 130–132, 248–249, Gly-292, 307–311, and Arg-333; these read RSS, NA, and KPIPT.

This sequence belongs to the chorismate synthase family. In terms of assembly, homotetramer. FMNH2 is required as a cofactor.

It catalyses the reaction 5-O-(1-carboxyvinyl)-3-phosphoshikimate = chorismate + phosphate. Its pathway is metabolic intermediate biosynthesis; chorismate biosynthesis; chorismate from D-erythrose 4-phosphate and phosphoenolpyruvate: step 7/7. In terms of biological role, catalyzes the anti-1,4-elimination of the C-3 phosphate and the C-6 proR hydrogen from 5-enolpyruvylshikimate-3-phosphate (EPSP) to yield chorismate, which is the branch point compound that serves as the starting substrate for the three terminal pathways of aromatic amino acid biosynthesis. This reaction introduces a second double bond into the aromatic ring system. This is Chorismate synthase from Exiguobacterium sibiricum (strain DSM 17290 / CCUG 55495 / CIP 109462 / JCM 13490 / 255-15).